We begin with the raw amino-acid sequence, 387 residues long: 3-ketoacyl-CoA thiolase (387 aa).

The Acyl-thioester intermediate role is filled by cysteine 91. Residues histidine 343 and cysteine 373 each act as proton acceptor in the active site.

The protein belongs to the thiolase-like superfamily. Thiolase family. As to quaternary structure, heterotetramer of two alpha chains (FadB) and two beta chains (FadA).

Its subcellular location is the cytoplasm. The enzyme catalyses an acyl-CoA + acetyl-CoA = a 3-oxoacyl-CoA + CoA. Its pathway is lipid metabolism; fatty acid beta-oxidation. In terms of biological role, catalyzes the final step of fatty acid oxidation in which acetyl-CoA is released and the CoA ester of a fatty acid two carbons shorter is formed. The protein is 3-ketoacyl-CoA thiolase of Aeromonas salmonicida (strain A449).